A 322-amino-acid chain; its full sequence is Ig gamma-2A chain C region (322 aa).

3 consecutive Ig-like domains span residues 6-98 (PSVY…KKIV), 115-212 (VFIF…KSIS), and 221-317 (PQVY…KSLS). 3 disulfide bridges follow: Cys-27–Cys-82, Cys-136–Cys-196, and Cys-242–Cys-300. The N-linked (GlcNAc...) asparagine glycan is linked to Asn-172.

The chain is Ig gamma-2A chain C region (Igg-2a) from Rattus norvegicus (Rat).